Reading from the N-terminus, the 312-residue chain is 4-hydroxyproline 2-epimerase (312 aa).

The active-site Proton acceptor is the cysteine 88. Substrate contacts are provided by residues 89-90 (GH), histidine 208, and aspartate 234. The active-site Proton donor is the cysteine 238. 239-240 (GT) contributes to the substrate binding site.

This sequence belongs to the proline racemase family.

It catalyses the reaction trans-4-hydroxy-L-proline = cis-4-hydroxy-D-proline. In terms of biological role, catalyzes the epimerization of trans-4-hydroxy-L-proline (t4LHyp) to cis-4-hydroxy-D-proline (c4DHyp). Is likely involved in a degradation pathway that converts t4LHyp to alpha-ketoglutarate. Can also catalyze the epimerization of trans-3-hydroxy-L-proline (t3LHyp) to cis-3-hydroxy-D-proline (c3DHyp), albeit with 500-fold lower efficiency. Displays no proline racemase activity. The protein is 4-hydroxyproline 2-epimerase of Xanthomonas campestris pv. campestris (strain ATCC 33913 / DSM 3586 / NCPPB 528 / LMG 568 / P 25).